Reading from the N-terminus, the 388-residue chain is Phosphoglycerate kinase (388 aa).

Substrate-binding positions include 21–23 (DLN), Arg36, 59–62 (HLGR), Arg114, and Arg147. ATP contacts are provided by residues Lys198, Glu315, and 341–344 (GGDT).

Belongs to the phosphoglycerate kinase family. As to quaternary structure, monomer.

It is found in the cytoplasm. The enzyme catalyses (2R)-3-phosphoglycerate + ATP = (2R)-3-phospho-glyceroyl phosphate + ADP. The protein operates within carbohydrate degradation; glycolysis; pyruvate from D-glyceraldehyde 3-phosphate: step 2/5. This is Phosphoglycerate kinase from Hahella chejuensis (strain KCTC 2396).